Reading from the N-terminus, the 326-residue chain is Phospho-N-acetylmuramoyl-pentapeptide-transferase (326 aa).

10 helical membrane-spanning segments follow: residues 4-24 (IWVA…LVIP), 49-69 (TPTM…FLLI), 74-94 (GLIV…DDYI), 109-129 (KLLG…FEAG), 151-171 (LGWW…SNAV), 179-199 (GLAA…ALAA), 203-223 (GVAA…FFNF), 228-248 (VFMG…AAVV), 254-274 (LFLI…IQVI), and 303-323 (VVIT…AGLY).

It belongs to the glycosyltransferase 4 family. MraY subfamily. Mg(2+) is required as a cofactor.

The protein resides in the cell membrane. The catalysed reaction is UDP-N-acetyl-alpha-D-muramoyl-L-alanyl-gamma-D-glutamyl-meso-2,6-diaminopimeloyl-D-alanyl-D-alanine + di-trans,octa-cis-undecaprenyl phosphate = di-trans,octa-cis-undecaprenyl diphospho-N-acetyl-alpha-D-muramoyl-L-alanyl-D-glutamyl-meso-2,6-diaminopimeloyl-D-alanyl-D-alanine + UMP. Its pathway is cell wall biogenesis; peptidoglycan biosynthesis. Catalyzes the initial step of the lipid cycle reactions in the biosynthesis of the cell wall peptidoglycan: transfers peptidoglycan precursor phospho-MurNAc-pentapeptide from UDP-MurNAc-pentapeptide onto the lipid carrier undecaprenyl phosphate, yielding undecaprenyl-pyrophosphoryl-MurNAc-pentapeptide, known as lipid I. This Pelotomaculum thermopropionicum (strain DSM 13744 / JCM 10971 / SI) protein is Phospho-N-acetylmuramoyl-pentapeptide-transferase.